Reading from the N-terminus, the 689-residue chain is Elongation factor G (689 aa).

Positions 9 to 283 (AKFRNIGIMA…AIIEFMPSPL (275 aa)) constitute a tr-type G domain. GTP contacts are provided by residues 18-25 (AHIDAGKT), 82-86 (DTPGH), and 136-139 (NKMD).

It belongs to the TRAFAC class translation factor GTPase superfamily. Classic translation factor GTPase family. EF-G/EF-2 subfamily.

It is found in the cytoplasm. Its function is as follows. Catalyzes the GTP-dependent ribosomal translocation step during translation elongation. During this step, the ribosome changes from the pre-translocational (PRE) to the post-translocational (POST) state as the newly formed A-site-bound peptidyl-tRNA and P-site-bound deacylated tRNA move to the P and E sites, respectively. Catalyzes the coordinated movement of the two tRNA molecules, the mRNA and conformational changes in the ribosome. The polypeptide is Elongation factor G (Clostridium botulinum (strain ATCC 19397 / Type A)).